The primary structure comprises 1026 residues: Multidrug resistance protein MdtC (1026 aa).

Helical transmembrane passes span 15 to 35, 333 to 353, 360 to 380, 387 to 407, 431 to 451, 463 to 483, 528 to 548, 853 to 873, 897 to 917, 953 to 973, and 984 to 1004; these read ILIA…LPVA, EVEE…FLFL, LIPA…MYLC, LSLM…IVVL, VGFT…PLLL, FAVT…TLTP, LVGV…IAIP, LILI…LYES, LFNA…IGIV, PIMM…LSGG, and ITIV…TPVV.

Belongs to the resistance-nodulation-cell division (RND) (TC 2.A.6) family. MdtC subfamily. In terms of assembly, part of a tripartite efflux system composed of MdtA, MdtB and MdtC. MdtC forms a heteromultimer with MdtB.

The protein localises to the cell inner membrane. This chain is Multidrug resistance protein MdtC, found in Salmonella dublin (strain CT_02021853).